Here is a 270-residue protein sequence, read N- to C-terminus: Tryptophan synthase alpha chain (270 aa).

Residues glutamate 49 and aspartate 60 each act as proton acceptor in the active site.

This sequence belongs to the TrpA family. Tetramer of two alpha and two beta chains.

It carries out the reaction (1S,2R)-1-C-(indol-3-yl)glycerol 3-phosphate + L-serine = D-glyceraldehyde 3-phosphate + L-tryptophan + H2O. Its pathway is amino-acid biosynthesis; L-tryptophan biosynthesis; L-tryptophan from chorismate: step 5/5. Its function is as follows. The alpha subunit is responsible for the aldol cleavage of indoleglycerol phosphate to indole and glyceraldehyde 3-phosphate. This is Tryptophan synthase alpha chain from Thermobifida fusca (strain YX).